A 306-amino-acid chain; its full sequence is Aspartate carbamoyltransferase catalytic subunit (306 aa).

Carbamoyl phosphate-binding residues include R56 and T57. Position 84 (K84) interacts with L-aspartate. Carbamoyl phosphate is bound by residues R106, H136, and Q139. L-aspartate-binding residues include R169 and R221. A262 and P263 together coordinate carbamoyl phosphate.

Belongs to the aspartate/ornithine carbamoyltransferase superfamily. ATCase family. Heterododecamer (2C3:3R2) of six catalytic PyrB chains organized as two trimers (C3), and six regulatory PyrI chains organized as three dimers (R2).

The enzyme catalyses carbamoyl phosphate + L-aspartate = N-carbamoyl-L-aspartate + phosphate + H(+). The protein operates within pyrimidine metabolism; UMP biosynthesis via de novo pathway; (S)-dihydroorotate from bicarbonate: step 2/3. Its function is as follows. Catalyzes the condensation of carbamoyl phosphate and aspartate to form carbamoyl aspartate and inorganic phosphate, the committed step in the de novo pyrimidine nucleotide biosynthesis pathway. This chain is Aspartate carbamoyltransferase catalytic subunit, found in Streptococcus gordonii (strain Challis / ATCC 35105 / BCRC 15272 / CH1 / DL1 / V288).